Reading from the N-terminus, the 173-residue chain is Small ribosomal subunit protein uS13 (173 aa).

Basic residues predominate over residues glycine 130–arginine 143. Residues glycine 130–glycine 155 are disordered.

It belongs to the universal ribosomal protein uS13 family. Part of the 30S ribosomal subunit. Forms a loose heterodimer with protein S19. Forms two bridges to the 50S subunit in the 70S ribosome.

Functionally, located at the top of the head of the 30S subunit, it contacts several helices of the 16S rRNA. In the 70S ribosome it contacts the 23S rRNA (bridge B1a) and protein L5 of the 50S subunit (bridge B1b), connecting the 2 subunits; these bridges are implicated in subunit movement. This chain is Small ribosomal subunit protein uS13, found in Haloquadratum walsbyi (strain DSM 16790 / HBSQ001).